We begin with the raw amino-acid sequence, 87 residues long: Phosphocarrier protein HPr (87 aa).

The HPr domain occupies 2–87 (ASKDFHIVAE…NETMTKEGLA (86 aa)). Catalysis depends on His15, which acts as the Pros-phosphohistidine intermediate. Ser46 carries the post-translational modification Phosphoserine; by HPrK/P.

Belongs to the HPr family.

It is found in the cytoplasm. Phosphorylation on Ser-46 inhibits the phosphoryl transfer from enzyme I to HPr. General (non sugar-specific) component of the phosphoenolpyruvate-dependent sugar phosphotransferase system (sugar PTS). This major carbohydrate active-transport system catalyzes the phosphorylation of incoming sugar substrates concomitantly with their translocation across the cell membrane. The phosphoryl group from phosphoenolpyruvate (PEP) is transferred to the phosphoryl carrier protein HPr by enzyme I. Phospho-HPr then transfers it to the PTS EIIA domain. Its function is as follows. P-Ser-HPr interacts with the catabolite control protein A (CcpA), forming a complex that binds to DNA at the catabolite response elements cre, operator sites preceding a large number of catabolite-regulated genes. Thus, P-Ser-HPr is a corepressor in carbon catabolite repression (CCR), a mechanism that allows bacteria to coordinate and optimize the utilization of available carbon sources. P-Ser-HPr also plays a role in inducer exclusion, in which it probably interacts with several non-PTS permeases and inhibits their transport activity. This is Phosphocarrier protein HPr (ptsH) from Streptococcus mutans serotype c (strain ATCC 700610 / UA159).